A 109-amino-acid chain; its full sequence is Mitochondrial import receptor subunit TOM22 homolog (109 aa).

Topologically, residues 1-60 are cytoplasmic; it reads MALVRDDFDDIPDSEIHETIVERIEGLGEMFPDALRSAVHSTVDWSIWGVKGVFSLTKST. Residues 61–77 traverse the membrane as a helical segment; sequence IWVVSTTSLIAFLPYII. The Mitochondrial intermembrane portion of the chain corresponds to 78-109; the sequence is EKERSDLEKTQVAQQRQMLLGPSAAIQQAKTA.

Belongs to the Tom22 family. Forms part of the preprotein translocase complex of the outer mitochondrial membrane (TOM complex).

Its subcellular location is the mitochondrion outer membrane. Central receptor component of the translocase of the outer membrane of mitochondria (TOM complex) responsible for the recognition and translocation of cytosolically synthesized mitochondrial preproteins. Together with the peripheral receptor tomm-20 functions as the transit peptide receptor and facilitates the movement of preproteins into the translocation pore. This Caenorhabditis elegans protein is Mitochondrial import receptor subunit TOM22 homolog.